The primary structure comprises 70 residues: Turripeptide OL179 (70 aa).

The first 21 residues, 1-21, serve as a signal peptide directing secretion; that stretch reads MMAKQVVVLLALLLLLPIVTA. Positions 22–32 are excised as a propeptide; sequence SMGDASGRTGR.

As to expression, expressed by the venom duct.

It is found in the secreted. Functionally, acts as a neurotoxin by inhibiting an ion channel. This chain is Turripeptide OL179, found in Iotyrris olangoensis (Sea snail).